Consider the following 404-residue polypeptide: D-galactonate dehydratase family member Ent638_1932 (404 aa).

Positions 37 and 122 each coordinate substrate. The active-site Proton donor/acceptor is the Tyr-159. Asp-212 is a binding site for Mg(2+). His-214 (proton donor/acceptor) is an active-site residue. 2 residues coordinate Mg(2+): Glu-238 and Glu-264. Substrate is bound by residues Glu-264, Arg-285, His-314, Asp-318, and Glu-341.

It belongs to the mandelate racemase/muconate lactonizing enzyme family. GalD subfamily. It depends on Mg(2+) as a cofactor.

The catalysed reaction is D-mannonate = 2-dehydro-3-deoxy-D-gluconate + H2O. Has low D-mannonate dehydratase activity (in vitro), suggesting that this is not a physiological substrate and that it has no significant role in D-mannonate degradation in vivo. Has no detectable activity with a panel of 70 other acid sugars (in vitro). In Enterobacter sp. (strain 638), this protein is D-galactonate dehydratase family member Ent638_1932.